The sequence spans 298 residues: Myozenin-1 (298 aa).

A disordered region spans residues 1 to 34 (MPLSGTPAPNKKRKSSKLIMELTGGGQESSGLNL). Ser82 is modified (phosphoserine). The interval 105–173 (FSYSKGSSGG…TGTGDQAGGE (69 aa)) is disordered. Over residues 118 to 129 (GSSSAGQYGSGQ) the composition is skewed to low complexity. The span at 136 to 172 (SGSGSGGAGGPGSQTGRGGDAGTTGVGETGTGDQAGG) shows a compositional bias: gly residues.

The protein belongs to the myozenin family. As to quaternary structure, interacts with ACTN2, ACTN3, FLNA, FLNB, FLNC, LDB3, PPP3CA and TCAP. Interacts via its C-terminal region with MYOT.

The protein resides in the nucleus. Its subcellular location is the cell projection. The protein localises to the pseudopodium. Functionally, myozenins may serve as intracellular binding proteins involved in linking Z-disk proteins such as alpha-actinin, gamma-filamin, TCAP/telethonin, LDB3/ZASP and localizing calcineurin signaling to the sarcomere. Plays an important role in the modulation of calcineurin signaling. May play a role in myofibrillogenesis. This is Myozenin-1 (MYOZ1) from Sus scrofa (Pig).